Here is a 637-residue protein sequence, read N- to C-terminus: Probable potassium transport system protein Kup 2 (637 aa).

Helical transmembrane passes span F18–L38, L61–L81, M107–I127, P145–V165, A174–I194, A211–L231, W255–L275, A293–I313, I345–F365, L371–F391, A402–A422, and D429–T449.

The protein belongs to the HAK/KUP transporter (TC 2.A.72) family.

The protein localises to the cell inner membrane. The catalysed reaction is K(+)(in) + H(+)(in) = K(+)(out) + H(+)(out). Its function is as follows. Transport of potassium into the cell. Likely operates as a K(+):H(+) symporter. This Agrobacterium fabrum (strain C58 / ATCC 33970) (Agrobacterium tumefaciens (strain C58)) protein is Probable potassium transport system protein Kup 2.